The sequence spans 748 residues: Acyl-coenzyme A oxidase (748 aa).

This sequence belongs to the acyl-CoA oxidase family. As to quaternary structure, homooctamer. FAD serves as cofactor.

It is found in the peroxisome. It carries out the reaction a 2,3-saturated acyl-CoA + O2 = a (2E)-enoyl-CoA + H2O2. It functions in the pathway lipid metabolism; peroxisomal fatty acid beta-oxidation. This is Acyl-coenzyme A oxidase (POX1) from Saccharomyces cerevisiae (strain ATCC 204508 / S288c) (Baker's yeast).